We begin with the raw amino-acid sequence, 226 residues long: Ribosome maturation factor RimP (226 aa).

The tract at residues 190-226 (VFPDTTRPQPGGKTGQRKKAQPKKPARGGAPHDDTTD) is disordered. Over residues 204–215 (GQRKKAQPKKPA) the composition is skewed to basic residues.

Belongs to the RimP family.

The protein resides in the cytoplasm. Required for maturation of 30S ribosomal subunits. The sequence is that of Ribosome maturation factor RimP from Nitratidesulfovibrio vulgaris (strain DSM 19637 / Miyazaki F) (Desulfovibrio vulgaris).